Here is a 246-residue protein sequence, read N- to C-terminus: Zinc import ATP-binding protein ZnuC (246 aa).

An ABC transporter domain is found at 24-243; sequence LKIENLALAY…RTLNEIFSSY (220 aa). 56-63 contributes to the ATP binding site; the sequence is GPNGGGKT.

This sequence belongs to the ABC transporter superfamily. Zinc importer (TC 3.A.1.15.5) family. In terms of assembly, the complex is composed of two ATP-binding proteins (ZnuC), two transmembrane proteins (ZnuB) and a solute-binding protein (ZnuA).

It localises to the cell membrane. It carries out the reaction Zn(2+)(out) + ATP(in) + H2O(in) = Zn(2+)(in) + ADP(in) + phosphate(in) + H(+)(in). Part of the ABC transporter complex ZnuABC involved in zinc import. Responsible for energy coupling to the transport system. The polypeptide is Zinc import ATP-binding protein ZnuC (Wolbachia pipientis wMel).